The chain runs to 211 residues: FMN-dependent NADH:quinone oxidoreductase (211 aa).

FMN is bound by residues Ser-10 and 16–18 (STS).

It belongs to the azoreductase type 1 family. Homodimer. Requires FMN as cofactor.

The enzyme catalyses 2 a quinone + NADH + H(+) = 2 a 1,4-benzosemiquinone + NAD(+). It catalyses the reaction N,N-dimethyl-1,4-phenylenediamine + anthranilate + 2 NAD(+) = 2-(4-dimethylaminophenyl)diazenylbenzoate + 2 NADH + 2 H(+). Its function is as follows. Quinone reductase that provides resistance to thiol-specific stress caused by electrophilic quinones. In terms of biological role, also exhibits azoreductase activity. Catalyzes the reductive cleavage of the azo bond in aromatic azo compounds to the corresponding amines. This is FMN-dependent NADH:quinone oxidoreductase from Frankia casuarinae (strain DSM 45818 / CECT 9043 / HFP020203 / CcI3).